We begin with the raw amino-acid sequence, 497 residues long: Solute carrier family 2, facilitated glucose transporter member 6 (497 aa).

Residues 1–36 (MQEPLLRTEGLDYDTFPEVPATPGERERAGALKNRR) are Cytoplasmic-facing. Positions 5-6 (LL) match the Dileucine internalization motif motif. Residues 37–57 (VFLATFAAVLGNFSFGYALVY) form a helical membrane-spanning segment. The Extracellular portion of the chain corresponds to 58-80 (TSPVIPELKLSSDPALHLDKIQA). Residues 81 to 101 (SWFGSVFTLGAAAGGLSAMLL) form a helical membrane-spanning segment. Residues 102 to 115 (NDLLGRKLSIMFSA) are Cytoplasmic-facing. A helical membrane pass occupies residues 116–136 (VPSAIGYAIMAGARGLWMLLL). Topologically, residues 137–138 (GR) are extracellular. A helical membrane pass occupies residues 139 to 159 (MLTGFAGGLTAACIPVYVSEI). Over 160-171 (APPDVRGALGAT) the chain is Cytoplasmic. The chain crosses the membrane as a helical span at residues 172-192 (PQLMAVFGSLSLYALGLLLPW). Residue Q173 coordinates a D-hexose. Position 193 (R193) is a topological domain, extracellular. A helical membrane pass occupies residues 194–214 (WLAVAGEGPVLIMILLLSFMP). The Cytoplasmic segment spans residues 215 to 273 (NSPRFLLSKSRDEEALQALTWLRADSEVHWEFEQIQDNVRRQSSRVSWAEAREPRVYRP). A helical membrane pass occupies residues 274 to 294 (VLIAVLMRFLQQLTGITPILV). Position 284–285 (284–285 (QQ)) interacts with a D-hexose. Residues 295–312 (YLQTIFDNTSVVLPSQQD) are Extracellular-facing. The N-linked (GlcNAc...) asparagine glycan is linked to N302. The helical transmembrane segment at 313-333 (AAIVGAVRLLSVLIAAVTMDL) threads the bilayer. Over 334–337 (AGRK) the chain is Cytoplasmic. Residues 338 to 358 (VLLYVSASVMFAANLTLGLYV) form a helical membrane-spanning segment. Residues 359–385 (QFVPRPLTPNSTVEIVTLGDTAFNYLT) are Extracellular-facing. N-linked (GlcNAc...) asparagine glycosylation occurs at N368. The helical transmembrane segment at 386–406 (LIPLLATMLFIMGYAMGWGPI) threads the bilayer. Topologically, residues 407-425 (TWLLMSEVLPLRARGVASG) are cytoplasmic. Position 408 (W408) interacts with a D-hexose. Residues 426–446 (LCVLVSWLTAFVLTNYFLLAV) traverse the membrane as a helical segment. Position 447 (N447) is a topological domain, extracellular. Residues 448 to 468 (AFGLQVPFFFFSAICLLSLLF) form a helical membrane-spanning segment. At 469–497 (TGCCVPETRGRSLEQIEAFFHTRRMSFRP) the chain is on the cytoplasmic side.

Belongs to the major facilitator superfamily. Sugar transporter (TC 2.A.1.1) family. As to expression, mainly expressed in brain and spleen. Also expressed in lung, heart, muscle, liver, kidney, fat, whole blood, testes, ovaries and uterus.

The protein resides in the lysosome membrane. Its function is as follows. Probable sugar transporter that acts as a regulator of glycolysis in macrophages. Does not transport glucose. The polypeptide is Solute carrier family 2, facilitated glucose transporter member 6 (Mus musculus (Mouse)).